We begin with the raw amino-acid sequence, 90 residues long: UPF0335 protein RPB_1426 (90 aa).

The protein belongs to the UPF0335 family.

The polypeptide is UPF0335 protein RPB_1426 (Rhodopseudomonas palustris (strain HaA2)).